The sequence spans 246 residues: Carboxylesterase (246 aa).

Ser-93 serves as the catalytic Nucleophile. Residues Asp-192 and His-222 each act as charge relay system in the active site.

Belongs to the lipase/esterase LIP3/BchO family. In terms of assembly, homodimer.

It catalyses the reaction a carboxylic ester + H2O = an alcohol + a carboxylate + H(+). Functionally, involved in the detoxification of xenobiotics. Shows maximal activity with C6 substrates, with gradually decreasing activity from C8 to C12 substrates. No activity for higher chain length substrates acids rather than long-chain ones. The polypeptide is Carboxylesterase (est) (Geobacillus stearothermophilus (Bacillus stearothermophilus)).